The primary structure comprises 176 residues: Endothelin-2 (176 aa).

Residues 1–22 (MVSPAWCSIALALLLALHEGKG) form the signal peptide. Positions 23-44 (QAAATMEQPASAPKGRGPHLRF) are excised as a propeptide. Cystine bridges form between C47–C61 and C49–C57. The propeptide occupies 68–176 (VNTAGQTAPY…IPAHSRRRKR (109 aa)). The tract at residues 94–109 (CECSSAGDSACATFCH) is endothelin-like.

This sequence belongs to the endothelin/sarafotoxin family.

It localises to the secreted. Functionally, vasoconstrictor. The sequence is that of Endothelin-2 (Edn2) from Rattus norvegicus (Rat).